The following is a 177-amino-acid chain: Large ribosomal subunit protein uL6 (177 aa).

The protein belongs to the universal ribosomal protein uL6 family. Part of the 50S ribosomal subunit.

This protein binds to the 23S rRNA, and is important in its secondary structure. It is located near the subunit interface in the base of the L7/L12 stalk, and near the tRNA binding site of the peptidyltransferase center. This is Large ribosomal subunit protein uL6 from Brucella melitensis biotype 1 (strain ATCC 23456 / CCUG 17765 / NCTC 10094 / 16M).